We begin with the raw amino-acid sequence, 387 residues long: Probable G-protein coupled receptor 173 (387 aa).

Topologically, residues 1 to 40 (MANGNASSDGPGNPLAAVVSTTGGVMGGAPSSAVSTYVKL) are extracellular. The N-linked (GlcNAc...) asparagine glycan is linked to N5. Residues 41-61 (VLLGLIICISLVGNLVVSLLV) form a helical membrane-spanning segment. At 62-87 (LRDRALHKAPYYFLLDLCLADTIRSA) the chain is on the cytoplasmic side. The chain crosses the membrane as a helical span at residues 88 to 108 (VCFPFVLVSIKNGSAWTYSVL). Residues 109–111 (SCK) are Extracellular-facing. A disulfide bond links C110 and C188. A helical transmembrane segment spans residues 112-132 (VVAFMAVLFCFHAAFMLFCIS). The Cytoplasmic segment spans residues 133–153 (VTRYMAIAHHRFYSKRMTFWT). A helical membrane pass occupies residues 154-174 (CVAVVCMVWTLSVAMAFPPVF). Residues 175–202 (DVGTYKFIREEDQCIFEHRYFKANDTLG) are Extracellular-facing. An N-linked (GlcNAc...) asparagine glycan is attached at N198. A helical membrane pass occupies residues 203-223 (FMLMLAVLILATHVVYMKLLL). Over 224–301 (FEYKHRKMKP…FKAEKQLGRM (78 aa)) the chain is Cytoplasmic. A helical membrane pass occupies residues 302 to 322 (FYVITLFFLVLWSPYIVACYW). Residues 323–335 (RVFVKACTIPHRY) are Extracellular-facing. A helical membrane pass occupies residues 336-356 (LSTTVWMSFAQAGVNPIICFF). The Cytoplasmic portion of the chain corresponds to 357 to 387 (LNKDLKKGLLAHLPPCCRTPPQLPREPYCVM).

Belongs to the G-protein coupled receptor 1 family.

Its subcellular location is the cell membrane. In terms of biological role, is a receptor for the SMIM20 derived peptides Phoenixin-14 and Phoenixin-20. It mediates the Phoenixin-14 and Phoenixin-20 augmentation of gonadotropin-releasing hormone (GNRH) signaling in the hypothalamus and pituitary gland. In the ovary, it mediates the effects of Phoenixin-14 and Phoenixin-20 induced granulosa cell proliferation during follicular growth. The polypeptide is Probable G-protein coupled receptor 173 (gpr173) (Danio rerio (Zebrafish)).